Consider the following 180-residue polypeptide: Insulin-like growth factor 2 (180 aa).

Positions 1–24 (MGIPMGKSMLVLLTFLAFASCCIA) are cleaved as a signal peptide. Residues 25 to 52 (AYRPSETLCGGELVDTLQFVCGDRGFYF) form a b region. 3 disulfide bridges follow: cysteine 33-cysteine 71, cysteine 45-cysteine 84, and cysteine 70-cysteine 75. The c stretch occupies residues 53–64 (SRPASRVSRRSR). Positions 65-85 (GIVEECCFRSCDLALLETYCA) are a. Residues 86–91 (TPAKSE) are d. Positions 92 to 180 (RDVSTPPTVL…APPEMASNRK (89 aa)) are cleaved as a propeptide — e peptide. O-linked (GalNAc...) threonine glycans are attached at residues threonine 96, threonine 99, and threonine 163. Residues 161-180 (LPTQDPAHGGAPPEMASNRK) are disordered.

The protein belongs to the insulin family. As to quaternary structure, interacts with MYORG; this interaction is required for IGF2 secretion. Interacts with integrins ITGAV:ITGB3 and ITGA6:ITGB4; integrin-binding is required for IGF2 signaling. Interacts with IGFBP2. In terms of processing, O-glycosylated with core 1 or possibly core 8 glycans. Thr-96 is a minor glycosylation site compared to Thr-99. Proteolytically processed by PCSK4, proIGF2 is cleaved at Arg-128 and Arg-92 to generate big-IGF2 and mature IGF2. As to expression, expressed in heart, placenta, lung, liver, muscle, kidney, tongue, limb, eye and pancreas.

Its subcellular location is the secreted. Functionally, the insulin-like growth factors possess growth-promoting activity. Major fetal growth hormone in mammals. Plays a key role in regulating fetoplacental development. IGF2 is influenced by placental lactogen. Also involved in tissue differentiation. In adults, involved in glucose metabolism in adipose tissue, skeletal muscle and liver. Acts as a ligand for integrin which is required for IGF2 signaling. Positively regulates myogenic transcription factor MYOD1 function by facilitating the recruitment of transcriptional coactivators, thereby controlling muscle terminal differentiation. Inhibits myoblast differentiation and modulates metabolism via increasing the mitochondrial respiration rate. Preptin undergoes glucose-mediated co-secretion with insulin, and acts as a physiological amplifier of glucose-mediated insulin secretion. Exhibits osteogenic properties by increasing osteoblast mitogenic activity through phosphoactivation of MAPK1 and MAPK3. The chain is Insulin-like growth factor 2 from Homo sapiens (Human).